We begin with the raw amino-acid sequence, 229 residues long: UPF0758 protein MA_1979 (229 aa).

The 123-residue stretch at 106–228 (KICSPKDVYA…YVSLKDEGFV (123 aa)) folds into the MPN domain. Residues histidine 177, histidine 179, and aspartate 190 each contribute to the Zn(2+) site. The short motif at 177–190 (HNHPSGDPSPSRED) is the JAMM motif element.

It belongs to the UPF0758 family.

The protein is UPF0758 protein MA_1979 of Methanosarcina acetivorans (strain ATCC 35395 / DSM 2834 / JCM 12185 / C2A).